A 503-amino-acid chain; its full sequence is Trehalose-6-phosphate synthase (503 aa).

A compositionally biased stretch (polar residues) spans 1-14 (MTDQSGNGVRSGSA). The disordered stretch occupies residues 1 to 20 (MTDQSGNGVRSGSASEAPPS). Residue Arg-31 coordinates D-glucose 6-phosphate. Position 51-52 (51-52 (GG)) interacts with UDP-alpha-D-glucose. Positions 109 and 163 each coordinate D-glucose 6-phosphate. Positions 305 and 310 each coordinate UDP-alpha-D-glucose. Residue Arg-343 coordinates D-glucose 6-phosphate. 408-412 (LVAKE) contacts UDP-alpha-D-glucose.

The protein belongs to the glycosyltransferase 20 family. As to quaternary structure, homotetramer.

The catalysed reaction is ADP-alpha-D-glucose + D-glucose 6-phosphate = alpha,alpha-trehalose 6-phosphate + ADP + H(+). The enzyme catalyses CDP-alpha-D-glucose + D-glucose 6-phosphate = alpha,alpha-trehalose 6-phosphate + CDP + H(+). It catalyses the reaction GDP-alpha-D-glucose + D-glucose 6-phosphate = alpha,alpha-trehalose 6-phosphate + GDP + H(+). It carries out the reaction TDP-alpha-D-glucose + D-glucose 6-phosphate = 5-methyl-UDP + alpha,alpha-trehalose 6-phosphate + H(+). The catalysed reaction is D-glucose 6-phosphate + UDP-alpha-D-glucose = alpha,alpha-trehalose 6-phosphate + UDP + H(+). The protein operates within glycan biosynthesis; trehalose biosynthesis. In terms of biological role, probably involved in the osmoprotection via the biosynthesis of trehalose and in the production of glycogen and alpha-glucan via the TreS-Pep2 branch involved in the biosynthesis of maltose-1-phosphate (M1P). Catalyzes the transfer of glucose from UDP-glucose (UDP-Glc) to D-glucose 6-phosphate (Glc-6-P) to form trehalose-6-phosphate. Probably also able to use ADP-Glc, CDP-Glc, GDP-Glc and TDP-Glc as glucosyl donors. The chain is Trehalose-6-phosphate synthase from Mycolicibacterium gilvum (strain PYR-GCK) (Mycobacterium gilvum (strain PYR-GCK)).